Consider the following 633-residue polypeptide: Putative serine/threonine-protein kinase L232 (633 aa).

In terms of domain architecture, Protein kinase spans 10–314 (YTIVDKLSEG…QSRKLFYEIL (305 aa)). Residues 16–24 (LSEGTYGIV) and Lys-39 contribute to the ATP site. The active-site Proton acceptor is the Asp-133.

It belongs to the protein kinase superfamily. Ser/Thr protein kinase family.

The enzyme catalyses L-seryl-[protein] + ATP = O-phospho-L-seryl-[protein] + ADP + H(+). It carries out the reaction L-threonyl-[protein] + ATP = O-phospho-L-threonyl-[protein] + ADP + H(+). In Acanthamoeba polyphaga mimivirus (APMV), this protein is Putative serine/threonine-protein kinase L232.